A 264-amino-acid chain; its full sequence is uncharacterized protein (264 aa).

The helical transmembrane segment at leucine 7 to threonine 27 threads the bilayer.

Belongs to the staphylococcal tandem lipoprotein family.

Its subcellular location is the cell membrane. This is an uncharacterized protein from Staphylococcus aureus (strain N315).